The chain runs to 422 residues: Putative polyketide beta-ketoacyl synthase 1 (422 aa).

In terms of domain architecture, Ketosynthase family 3 (KS3) spans threonine 2–glycine 416. Active-site for beta-ketoacyl synthase activity residues include cysteine 169, histidine 309, and histidine 346.

The protein belongs to the thiolase-like superfamily. Beta-ketoacyl-ACP synthases family.

It functions in the pathway antibiotic biosynthesis; curamycin biosynthesis. This chain is Putative polyketide beta-ketoacyl synthase 1 (curA), found in Streptomyces cyaneus (Streptomyces curacoi).